A 284-amino-acid chain; its full sequence is 2-dehydro-3-deoxyphosphooctonate aldolase (284 aa).

This sequence belongs to the KdsA family.

It is found in the cytoplasm. It carries out the reaction D-arabinose 5-phosphate + phosphoenolpyruvate + H2O = 3-deoxy-alpha-D-manno-2-octulosonate-8-phosphate + phosphate. Its pathway is carbohydrate biosynthesis; 3-deoxy-D-manno-octulosonate biosynthesis; 3-deoxy-D-manno-octulosonate from D-ribulose 5-phosphate: step 2/3. It functions in the pathway bacterial outer membrane biogenesis; lipopolysaccharide biosynthesis. In Cronobacter sakazakii (strain ATCC BAA-894) (Enterobacter sakazakii), this protein is 2-dehydro-3-deoxyphosphooctonate aldolase.